Consider the following 332-residue polypeptide: ADP-L-glycero-D-manno-heptose-6-epimerase (332 aa).

Residues 10 to 11 (MI), 31 to 32 (DK), Lys-38, Lys-53, 75 to 79 (MGACS), and Asn-92 contribute to the NADP(+) site. Tyr-145 (proton acceptor) is an active-site residue. Residue Lys-149 coordinates NADP(+). Asn-173 is a substrate binding site. 2 residues coordinate NADP(+): Val-174 and Lys-182. The active-site Proton acceptor is the Lys-182. Substrate is bound by residues Arg-184, His-191, 205–208 (FKSY), Arg-219, and Tyr-290.

The protein belongs to the NAD(P)-dependent epimerase/dehydratase family. HldD subfamily. As to quaternary structure, homopentamer. NADP(+) is required as a cofactor.

The enzyme catalyses ADP-D-glycero-beta-D-manno-heptose = ADP-L-glycero-beta-D-manno-heptose. The protein operates within nucleotide-sugar biosynthesis; ADP-L-glycero-beta-D-manno-heptose biosynthesis; ADP-L-glycero-beta-D-manno-heptose from D-glycero-beta-D-manno-heptose 7-phosphate: step 4/4. Its function is as follows. Catalyzes the interconversion between ADP-D-glycero-beta-D-manno-heptose and ADP-L-glycero-beta-D-manno-heptose via an epimerization at carbon 6 of the heptose. This is ADP-L-glycero-D-manno-heptose-6-epimerase from Fusobacterium nucleatum subsp. nucleatum (strain ATCC 25586 / DSM 15643 / BCRC 10681 / CIP 101130 / JCM 8532 / KCTC 2640 / LMG 13131 / VPI 4355).